The primary structure comprises 20 residues: Cytolysin tenebrosin-A (20 aa).

Positions 3-12 are plays an important role in the hemolytic activity; that stretch reads AVAGAVIEGA. Residues 11 to 20 form an N-terminal region region; sequence GATLTFEVLQ.

The protein belongs to the actinoporin family. Sea anemone subfamily. As to quaternary structure, octamer or nonamer in membranes. Monomer in the soluble state.

It is found in the secreted. It localises to the nematocyst. The protein resides in the target cell membrane. Functionally, pore-forming protein that forms cations-selective hydrophilic pores of around 1 nm and causes cardiac stimulation and cytolysis. Pore formation is a multi-step process that involves specific recognition of membrane sphingomyelin (but neither cholesterol nor phosphatidylcholine) using aromatic rich region and adjacent phosphocholine (POC) binding site, firm binding to the membrane (mainly driven by hydrophobic interactions) accompanied by the transfer of the N-terminal region to the lipid-water interface and finally pore formation after oligomerization of monomers. This is Cytolysin tenebrosin-A from Actinia tenebrosa (Australian red waratah sea anemone).